We begin with the raw amino-acid sequence, 381 residues long: Spermidine/putrescine import ATP-binding protein PotA (381 aa).

The ABC transporter domain occupies 22 to 252 (VELRNVFKFF…PKTSFVADFI (231 aa)). Residue 54–61 (GPSGCGKT) participates in ATP binding.

The protein belongs to the ABC transporter superfamily. Spermidine/putrescine importer (TC 3.A.1.11.1) family. As to quaternary structure, the complex is composed of two ATP-binding proteins (PotA), two transmembrane proteins (PotB and PotC) and a solute-binding protein (PotD).

It localises to the cell inner membrane. It carries out the reaction ATP + H2O + polyamine-[polyamine-binding protein]Side 1 = ADP + phosphate + polyamineSide 2 + [polyamine-binding protein]Side 1.. Functionally, part of the ABC transporter complex PotABCD involved in spermidine/putrescine import. Responsible for energy coupling to the transport system. The protein is Spermidine/putrescine import ATP-binding protein PotA of Trichormus variabilis (strain ATCC 29413 / PCC 7937) (Anabaena variabilis).